The chain runs to 381 residues: Queuine tRNA-ribosyltransferase (381 aa).

Aspartate 96 (proton acceptor) is an active-site residue. Substrate-binding positions include 96–100 (DSGGF), aspartate 150, glutamine 193, and glycine 220. The RNA binding stretch occupies residues 251 to 257 (GVGSPDS). Aspartate 270 (nucleophile) is an active-site residue. The tract at residues 275–279 (TRIAR) is RNA binding; important for wobble base 34 recognition. Cysteine 308, cysteine 310, cysteine 313, and histidine 339 together coordinate Zn(2+).

This sequence belongs to the queuine tRNA-ribosyltransferase family. Homodimer. Within each dimer, one monomer is responsible for RNA recognition and catalysis, while the other monomer binds to the replacement base PreQ1. Requires Zn(2+) as cofactor.

The catalysed reaction is 7-aminomethyl-7-carbaguanine + guanosine(34) in tRNA = 7-aminomethyl-7-carbaguanosine(34) in tRNA + guanine. The protein operates within tRNA modification; tRNA-queuosine biosynthesis. In terms of biological role, catalyzes the base-exchange of a guanine (G) residue with the queuine precursor 7-aminomethyl-7-deazaguanine (PreQ1) at position 34 (anticodon wobble position) in tRNAs with GU(N) anticodons (tRNA-Asp, -Asn, -His and -Tyr). Catalysis occurs through a double-displacement mechanism. The nucleophile active site attacks the C1' of nucleotide 34 to detach the guanine base from the RNA, forming a covalent enzyme-RNA intermediate. The proton acceptor active site deprotonates the incoming PreQ1, allowing a nucleophilic attack on the C1' of the ribose to form the product. After dissociation, two additional enzymatic reactions on the tRNA convert PreQ1 to queuine (Q), resulting in the hypermodified nucleoside queuosine (7-(((4,5-cis-dihydroxy-2-cyclopenten-1-yl)amino)methyl)-7-deazaguanosine). This Lysinibacillus sphaericus (strain C3-41) protein is Queuine tRNA-ribosyltransferase.